The following is a 257-amino-acid chain: 5-keto-4-deoxy-D-glucarate aldolase (257 aa).

Residue H51 is the Proton acceptor of the active site. Q152 provides a ligand contact to substrate. E154 serves as a coordination point for Mg(2+). Substrate-binding residues include S179 and D180. D180 contributes to the Mg(2+) binding site.

This sequence belongs to the HpcH/HpaI aldolase family. KDGluc aldolase subfamily. In terms of assembly, homohexamer; trimer of dimers. Mg(2+) is required as a cofactor.

It carries out the reaction 5-dehydro-4-deoxy-D-glucarate = 2-hydroxy-3-oxopropanoate + pyruvate. The enzyme catalyses 2-dehydro-3-deoxy-D-glucarate = 2-hydroxy-3-oxopropanoate + pyruvate. The protein operates within carbohydrate acid metabolism; galactarate degradation; D-glycerate from galactarate: step 2/3. In terms of biological role, catalyzes the reversible retro-aldol cleavage of both 5-keto-4-deoxy-D-glucarate and 2-keto-3-deoxy-D-glucarate to pyruvate and tartronic semialdehyde. The sequence is that of 5-keto-4-deoxy-D-glucarate aldolase from Shigella boydii serotype 18 (strain CDC 3083-94 / BS512).